The sequence spans 537 residues: 2-succinyl-5-enolpyruvyl-6-hydroxy-3-cyclohexene-1-carboxylate synthase (537 aa).

This sequence belongs to the TPP enzyme family. MenD subfamily. In terms of assembly, homodimer. Mg(2+) serves as cofactor. The cofactor is Mn(2+). It depends on thiamine diphosphate as a cofactor.

It catalyses the reaction isochorismate + 2-oxoglutarate + H(+) = 5-enolpyruvoyl-6-hydroxy-2-succinyl-cyclohex-3-ene-1-carboxylate + CO2. It functions in the pathway quinol/quinone metabolism; 1,4-dihydroxy-2-naphthoate biosynthesis; 1,4-dihydroxy-2-naphthoate from chorismate: step 2/7. The protein operates within quinol/quinone metabolism; menaquinone biosynthesis. Its function is as follows. Catalyzes the thiamine diphosphate-dependent decarboxylation of 2-oxoglutarate and the subsequent addition of the resulting succinic semialdehyde-thiamine pyrophosphate anion to isochorismate to yield 2-succinyl-5-enolpyruvyl-6-hydroxy-3-cyclohexene-1-carboxylate (SEPHCHC). The polypeptide is 2-succinyl-5-enolpyruvyl-6-hydroxy-3-cyclohexene-1-carboxylate synthase (Desulfotalea psychrophila (strain LSv54 / DSM 12343)).